The primary structure comprises 146 residues: Large ribosomal subunit protein uL15x (146 aa).

2 stretches are compositionally biased toward basic residues: residues 1-14 (MTTR…KRGH) and 21-30 (RIGKHRKHPG). The disordered stretch occupies residues 1–35 (MTTRFKKNRKKRGHVSAGHGRIGKHRKHPGGRGNA).

The protein belongs to the universal ribosomal protein uL15 family.

This Arabidopsis thaliana (Mouse-ear cress) protein is Large ribosomal subunit protein uL15x (RPL27AC).